The following is a 238-amino-acid chain: Ribose-5-phosphate isomerase A (238 aa).

Residues 30-33 (SGST), 87-90 (DGAD), and 100-103 (KGGG) contribute to the substrate site. The active-site Proton acceptor is Glu109. Position 127 (Lys127) interacts with substrate.

Belongs to the ribose 5-phosphate isomerase family. Homodimer.

It catalyses the reaction aldehydo-D-ribose 5-phosphate = D-ribulose 5-phosphate. It participates in carbohydrate degradation; pentose phosphate pathway; D-ribose 5-phosphate from D-ribulose 5-phosphate (non-oxidative stage): step 1/1. Catalyzes the reversible conversion of ribose-5-phosphate to ribulose 5-phosphate. In Synechococcus sp. (strain WH7803), this protein is Ribose-5-phosphate isomerase A.